We begin with the raw amino-acid sequence, 231 residues long: tRNA (guanine-N(1)-)-methyltransferase (231 aa).

S-adenosyl-L-methionine contacts are provided by residues G112 and 132–137; that span reads IGDYIL.

The protein belongs to the RNA methyltransferase TrmD family. In terms of assembly, homodimer.

It is found in the cytoplasm. The catalysed reaction is guanosine(37) in tRNA + S-adenosyl-L-methionine = N(1)-methylguanosine(37) in tRNA + S-adenosyl-L-homocysteine + H(+). Functionally, specifically methylates guanosine-37 in various tRNAs. The protein is tRNA (guanine-N(1)-)-methyltransferase of Sulfurimonas denitrificans (strain ATCC 33889 / DSM 1251) (Thiomicrospira denitrificans (strain ATCC 33889 / DSM 1251)).